Consider the following 120-residue polypeptide: SAGA-associated factor 11 (120 aa).

Low complexity predominate over residues 40–60; that stretch reads SLLNSSNSNTNSNTNGTIASN. Positions 40 to 82 are disordered; the sequence is SLLNSSNSNTNSNTNGTIASNGGNGTTSDENNEIENSTIQDKS. Residues 93–114 form an SGF11-type zinc finger; sequence FRCLNCGRNIAGGRFASHISKC.

The protein belongs to the SGF11 family. As to quaternary structure, component of the 1.8 MDa SAGA transcription coactivator-HAT complex. SAGA is built of 5 distinct domains with specialized functions. Within the SAGA complex, SUS1, SGF11, SGF73 and UBP8 form an additional subcomplex of SAGA called the DUB module (deubiquitination module). Interacts directly with SGF73, SUS1 and UBP8.

It localises to the nucleus. Functionally, functions as a component of the transcription regulatory histone acetylation (HAT) complex SAGA. At the promoters, SAGA is required for recruitment of the basal transcription machinery. It influences RNA polymerase II transcriptional activity through different activities such as TBP interaction and promoter selectivity, interaction with transcription activators, and chromatin modification through histone acetylation and deubiquitination. SAGA acetylates nucleosomal histone H3 to some extent (to form H3K9ac, H3K14ac, H3K18ac and H3K23ac). SAGA interacts with DNA via upstream activating sequences (UASs). Involved in transcriptional regulation of a subset of SAGA-regulated genes. Within the SAGA complex, participates in a subcomplex, that specifically deubiquitinates histones H2B. The polypeptide is SAGA-associated factor 11 (Candida albicans (strain SC5314 / ATCC MYA-2876) (Yeast)).